The primary structure comprises 603 residues: UvrABC system protein C (603 aa).

The GIY-YIG domain maps to 15–92 (DQPGCYLMKN…IQKHQPYYNI (78 aa)). The region spanning 197–232 (AQVKKQLTARMERAAGQLEFERAAEIRDQLHYIEVT) is the UVR domain.

It belongs to the UvrC family. In terms of assembly, interacts with UvrB in an incision complex.

It is found in the cytoplasm. The UvrABC repair system catalyzes the recognition and processing of DNA lesions. UvrC both incises the 5' and 3' sides of the lesion. The N-terminal half is responsible for the 3' incision and the C-terminal half is responsible for the 5' incision. The polypeptide is UvrABC system protein C (Limosilactobacillus fermentum (strain NBRC 3956 / LMG 18251) (Lactobacillus fermentum)).